The chain runs to 266 residues: N-formylglutamate deformylase (266 aa).

Belongs to the N-formylglutamate deformylase family. In terms of assembly, monomer.

It catalyses the reaction N-formyl-L-glutamate + H2O = formate + L-glutamate. The protein operates within amino-acid degradation; L-histidine degradation into L-glutamate; L-glutamate from N-formimidoyl-L-glutamate (deiminase route): step 2/2. Catalyzes the hydrolysis of N-formyl-L-glutamate to formate and L-glutamate. Shows weak activity with N-formyl-L-glutamine. This Pseudomonas aeruginosa (strain ATCC 15692 / DSM 22644 / CIP 104116 / JCM 14847 / LMG 12228 / 1C / PRS 101 / PAO1) protein is N-formylglutamate deformylase.